The sequence spans 248 residues: 1-(5-phosphoribosyl)-5-[(5-phosphoribosylamino)methylideneamino] imidazole-4-carboxamide isomerase (248 aa).

The active-site Proton acceptor is Asp-11. The active-site Proton donor is Asp-132.

This sequence belongs to the HisA/HisF family.

The protein resides in the cytoplasm. It catalyses the reaction 1-(5-phospho-beta-D-ribosyl)-5-[(5-phospho-beta-D-ribosylamino)methylideneamino]imidazole-4-carboxamide = 5-[(5-phospho-1-deoxy-D-ribulos-1-ylimino)methylamino]-1-(5-phospho-beta-D-ribosyl)imidazole-4-carboxamide. The protein operates within amino-acid biosynthesis; L-histidine biosynthesis; L-histidine from 5-phospho-alpha-D-ribose 1-diphosphate: step 4/9. In Afipia carboxidovorans (strain ATCC 49405 / DSM 1227 / KCTC 32145 / OM5) (Oligotropha carboxidovorans), this protein is 1-(5-phosphoribosyl)-5-[(5-phosphoribosylamino)methylideneamino] imidazole-4-carboxamide isomerase.